The following is a 281-amino-acid chain: UPF0046 protein C25E10.12 (281 aa).

This sequence belongs to the UPF0046 family.

This Caenorhabditis elegans protein is UPF0046 protein C25E10.12.